The primary structure comprises 494 residues: Guanosine-5'-triphosphate,3'-diphosphate pyrophosphatase (494 aa).

The protein belongs to the GppA/Ppx family. GppA subfamily.

The enzyme catalyses guanosine 3'-diphosphate 5'-triphosphate + H2O = guanosine 3',5'-bis(diphosphate) + phosphate + H(+). The protein operates within purine metabolism; ppGpp biosynthesis; ppGpp from GTP: step 2/2. Catalyzes the conversion of pppGpp to ppGpp. Guanosine pentaphosphate (pppGpp) is a cytoplasmic signaling molecule which together with ppGpp controls the 'stringent response', an adaptive process that allows bacteria to respond to amino acid starvation, resulting in the coordinated regulation of numerous cellular activities. This is Guanosine-5'-triphosphate,3'-diphosphate pyrophosphatase from Escherichia coli O157:H7.